The chain runs to 400 residues: Succinate--glutarate CoA-transferase (400 aa).

Asp181 functions as the Nucleophile in the catalytic mechanism.

The protein belongs to the CoA-transferase III family.

The catalysed reaction is glutarate + succinyl-CoA = glutaryl-CoA + succinate. It functions in the pathway amino-acid degradation. The protein operates within cofactor biosynthesis; biotin biosynthesis. Its function is as follows. Is involved in L-lysine degradation and provides glutaryl-CoA for biotin synthesis. Catalyzes the conversion of glutarate to glutaryl-CoA via the transfer of CoA from succinyl-CoA. The polypeptide is Succinate--glutarate CoA-transferase (Agrobacterium fabrum (strain C58 / ATCC 33970) (Agrobacterium tumefaciens (strain C58))).